The following is a 243-amino-acid chain: DNA repair protein RecO (243 aa).

This sequence belongs to the RecO family.

Functionally, involved in DNA repair and RecF pathway recombination. The protein is DNA repair protein RecO of Phenylobacterium zucineum (strain HLK1).